Here is a 276-residue protein sequence, read N- to C-terminus: Formamidopyrimidine-DNA glycosylase (276 aa).

Pro-2 (schiff-base intermediate with DNA) is an active-site residue. Glu-3 functions as the Proton donor in the catalytic mechanism. The active-site Proton donor; for beta-elimination activity is Lys-58. The DNA site is built by His-92, Arg-111, and Lys-154. An FPG-type zinc finger spans residues 239-273 (QVYGHVGEECPRCGNIFEKIKVSGRGTTFCPHCQV). Arg-263 (proton donor; for delta-elimination activity) is an active-site residue.

This sequence belongs to the FPG family. In terms of assembly, monomer. Zn(2+) serves as cofactor.

It catalyses the reaction Hydrolysis of DNA containing ring-opened 7-methylguanine residues, releasing 2,6-diamino-4-hydroxy-5-(N-methyl)formamidopyrimidine.. The enzyme catalyses 2'-deoxyribonucleotide-(2'-deoxyribose 5'-phosphate)-2'-deoxyribonucleotide-DNA = a 3'-end 2'-deoxyribonucleotide-(2,3-dehydro-2,3-deoxyribose 5'-phosphate)-DNA + a 5'-end 5'-phospho-2'-deoxyribonucleoside-DNA + H(+). Its function is as follows. Involved in base excision repair of DNA damaged by oxidation or by mutagenic agents. Acts as a DNA glycosylase that recognizes and removes damaged bases. Has a preference for oxidized purines, such as 7,8-dihydro-8-oxoguanine (8-oxoG). Has AP (apurinic/apyrimidinic) lyase activity and introduces nicks in the DNA strand. Cleaves the DNA backbone by beta-delta elimination to generate a single-strand break at the site of the removed base with both 3'- and 5'-phosphates. This is Formamidopyrimidine-DNA glycosylase from Lactobacillus acidophilus (strain ATCC 700396 / NCK56 / N2 / NCFM).